Here is a 1725-residue protein sequence, read N- to C-terminus: Latrophilin Cirl (1725 aa).

Topologically, residues 1–757 are extracellular; that stretch reads MALNELGNCA…LFTMFDGNMR (757 aa). One can recognise an SUEL-type lectin domain in the interval 18 to 107; that stretch reads ACEGKQLTIE…KYLEAHYQCI (90 aa). N135 carries an N-linked (GlcNAc...) asparagine glycan. A disordered region spans residues 164 to 284; sequence AVQPTHSTPS…SAANNSVNIG (121 aa). Composition is skewed to low complexity over residues 167 to 176 and 224 to 236; these read PTHSTPSSST and SSSS…SAGN. 7 N-linked (GlcNAc...) asparagine glycosylation sites follow: N236, N278, N326, N388, N645, N693, and N720. Residues 259-282 are compositionally biased toward polar residues; the sequence is LLTTKSSPNRTPGTTASAANNSVN. The disordered stretch occupies residues 361 to 390; the sequence is DDEYDDDLPAASSTTPQPSNNGGDCVHNSS. The segment covering 371 to 390 has biased composition (polar residues); it reads ASSTTPQPSNNGGDCVHNSS. In terms of domain architecture, GAIN-B spans 551 to 744; that stretch reads RNVVQKVKNI…AILMDVVDEH (194 aa). Disulfide bonds link C699/C726 and C714/C728. The segment at 699-744 is GPS; sequence CVFWNYIDHAWSANGCSLESTNRTHSVCSCNHLTNFAILMDVVDEH. The helical transmembrane segment at 758–778 threads the bilayer; sequence IFIYISVAICVVFIIIALLTL. Residues 779 to 791 are Cytoplasmic-facing; it reads KLFNGVFVKSART. Residues 792–812 form a helical membrane-spanning segment; it reads SIYSSIYICLLAIELLFLLGI. Topologically, residues 813–818 are extracellular; the sequence is EQTETS. Residues 819–839 form a helical membrane-spanning segment; sequence IFCGFITVFLHCAILSGTAWF. The Cytoplasmic portion of the chain corresponds to 840–865; it reads CYEAFHSYSTLTSDELLLEVDQTPKV. A helical membrane pass occupies residues 866–886; that stretch reads NCYYLLSYGLSLSVVAISLVI. Residues 887–910 lie on the Extracellular side of the membrane; it reads DPSTYTQNDYCVLMEANALFYSTF. Residues 911–931 form a helical membrane-spanning segment; it reads VAPVLIFFVAAITYTFLSWII. The Cytoplasmic segment spans residues 932 to 958; that stretch reads MRRKSRTALKTKEHTRLANVRFDIRCS. A helical transmembrane segment spans residues 959 to 979; it reads FVFLLLLSVVWCCAYFYLRGA. Over 980 to 986 the chain is Extracellular; it reads KLDEDGA. Residues 987-1007 form a helical membrane-spanning segment; sequence PIYGYCFICFNTLLGIYIFVF. At 1008 to 1725 the chain is on the cytoplasmic side; that stretch reads HCIQNEKIRR…VRCYLEPLAK (718 aa). The segment at 1056–1088 is disordered; the sequence is TANQSAGTLSKSKSKLPLGAGDEARDGDAQQQQ. Position 1153 is a phosphoserine (S1153). Disordered stretches follow at residues 1236–1263, 1309–1337, 1472–1555, and 1636–1705; these read HNNQ…LHSR, QQLQ…AEQH, GGGS…SDER, and LFGH…QARH. Over residues 1237 to 1246 the composition is skewed to basic residues; the sequence is NNQHGKKKRG. Phosphoserine is present on residues S1255 and S1262. Over residues 1309-1327 the composition is skewed to low complexity; that stretch reads QQLQQQQLRQQRQQQQQQL. A phosphoserine mark is found at S1328 and S1329. Positions 1478–1496 are enriched in low complexity; it reads GGSVTSRSQQQQQQQLKQK. 2 stretches are compositionally biased toward acidic residues: residues 1505–1522 and 1532–1543; these read DDDD…DEVT and CDDEDNESDIDD. A compositionally biased stretch (polar residues) spans 1651-1666; the sequence is QTPAQKRQQLQKLSPQ. Low complexity predominate over residues 1667-1683; the sequence is STTSSSSHTSHSNPQHA. Over residues 1684-1693 the composition is skewed to basic residues; the sequence is PAHHLQHHHT. A compositionally biased stretch (low complexity) spans 1694-1705; it reads QQQQQQQQQARH.

Belongs to the G-protein coupled receptor 2 family. LN-TM7 subfamily. As to quaternary structure, forms a heterodimer, consisting of a large extracellular region non-covalently linked to a seven-transmembrane moiety. In terms of processing, proteolytically cleaved into 2 subunits, an extracellular subunit and a seven-transmembrane subunit.

The protein localises to the cell membrane. The chain is Latrophilin Cirl from Drosophila mojavensis (Fruit fly).